Reading from the N-terminus, the 551-residue chain is Putative transport protein NTHI0043 (551 aa).

5 consecutive transmembrane segments (helical) span residues 4-24 (IAITISLLALVAVIGLWIGHW), 28-48 (GVGLGIGGVLFGGIIVAHFTN), 65-85 (FGLILFVYTIGIQVGPGFFSS), 95-115 (AFAILIIVLGSIAVVLVHKIA), and 157-177 (VSYAMAYPFGICGILLAMWLI). RCK C-terminal domains lie at 191–275 (RFNA…IIGY) and 277–360 (VDAP…VIGN). Helical transmembrane passes span 370-390 (MLPVFIGIGLGVLVGSIPFYI), 402-424 (AGGPLVVALILARIGTIGKLYWF), 438-458 (IVLFLAVVGLKSGGSFFDTLV), 463-483 (LEWMGYGIFITFIPLMITGIL), 492-512 (YLTICGLLAGSMTDPPALAFA), and 529-549 (VYPLVMFLRIMSPQLLAVLLW).

This sequence belongs to the AAE transporter (TC 2.A.81) family. YidE subfamily.

Its subcellular location is the cell membrane. The polypeptide is Putative transport protein NTHI0043 (Haemophilus influenzae (strain 86-028NP)).